The sequence spans 333 residues: Plasminogen (333 aa).

The 80-residue stretch at 4 to 83 folds into the Kringle 5 domain; sequence CMFGNGKGYR…LFDYCDVPQC (80 aa). Disulfide bonds link cysteine 4-cysteine 83, cysteine 25-cysteine 66, cysteine 54-cysteine 78, cysteine 90-cysteine 208, cysteine 100-cysteine 108, cysteine 130-cysteine 146, cysteine 222-cysteine 289, cysteine 252-cysteine 268, and cysteine 279-cysteine 307. Residues 104 to 331 form the Peptidase S1 domain; sequence VVGGCVANPH…FVTWIEGIMR (228 aa). Position 120 is a phosphoserine (serine 120). Residues histidine 145 and aspartate 188 each act as charge relay system in the active site. Serine 283 acts as the Charge relay system in catalysis.

This sequence belongs to the peptidase S1 family. Plasminogen subfamily. In terms of assembly, interacts with CSPG4 and AMOT. Interacts (via the Kringle domains) with HRG; the interaction tethers PLG to the cell surface and enhances its activation. Interacts (via Kringle 4 domain) with ADA; the interaction stimulates PLG activation when in complex with DPP4. Angiostatin: Interacts with ATP5F1A; the interaction inhibits most of the angiogenic effects of angiostatin.

It is found in the secreted. It catalyses the reaction Preferential cleavage: Lys-|-Xaa &gt; Arg-|-Xaa, higher selectivity than trypsin. Converts fibrin into soluble products.. With respect to regulation, converted into plasmin by plasminogen activators, both plasminogen and its activator being bound to fibrin. Activated with urokinase and high concentrations of streptokinase. Functionally, plasmin dissolves the fibrin of blood clots and acts as a proteolytic factor in a variety of other processes including embryonic development, tissue remodeling, tumor invasion, and inflammation. In ovulation, weakens the walls of the Graafian follicle. It activates the urokinase-type plasminogen activator, collagenases and several complement zymogens, such as C1, C4 and C5. Cleavage of fibronectin and laminin leads to cell detachment and apoptosis. Also cleaves fibrin, thrombospondin and von Willebrand factor. Its role in tissue remodeling and tumor invasion may be modulated by CSPG4. Binds to cells. This Canis lupus familiaris (Dog) protein is Plasminogen (PLG).